Reading from the N-terminus, the 399-residue chain is RNA polymerase sigma factor SigA1 (399 aa).

Residues 1–73 are disordered; it reads MTQLISIDKE…DEDSVGEDED (73 aa). Positions 60–73 are enriched in acidic residues; the sequence is DAIDDEDSVGEDED. The interval 167-237 is sigma-70 factor domain-2; the sequence is MVQSNLRLVV…TRAIADQSRT (71 aa). Residues 191-194 carry the Interaction with polymerase core subunit RpoC motif; that stretch reads DLIQ. The sigma-70 factor domain-3 stretch occupies residues 246–321; that stretch reads ETISRIKKTT…EADGETPEDE (76 aa). A sigma-70 factor domain-4 region spans residues 334-387; the sequence is VLSTLSPRERDVLRLRYGLDDGRMKTLEEIGQLFNVTRERIRQIEAKALRKLRH. Positions 360–379 form a DNA-binding region, H-T-H motif; that stretch reads LEEIGQLFNVTRERIRQIEA.

Belongs to the sigma-70 factor family. RpoD/SigA subfamily. As to quaternary structure, interacts transiently with the RNA polymerase catalytic core.

The protein localises to the cytoplasm. Its function is as follows. Sigma factors are initiation factors that promote the attachment of RNA polymerase to specific initiation sites and are then released. This sigma factor is the primary sigma factor during exponential growth. This is RNA polymerase sigma factor SigA1 from Synechococcus elongatus (strain ATCC 33912 / PCC 7942 / FACHB-805) (Anacystis nidulans R2).